A 513-amino-acid chain; its full sequence is MKLAYWMYAGPAHIGTLRVASSFRNVHAIMHAPLGDDYFNVMRSMLERERDFTPVTASIVDRHVLARGSQEKVVENITRKDKEERPDLIVLTPTCTSSILQEDLQNFVDRASIASNSDVILADVNHYRVNELQAADRTLEQVVRYYLDKARRQGTLSQSITEKPSVNIIGMFTLGFHNQHDCKELKRLLQDLGIQVNEVIPEGGSVENLRNLPKAWLNLVPYREVGLMTALYLEKEFGMPYVATTPMGIVGTAEFVRQIQSHINKWAPMFLGKLVDYEPYIDQQTRFISQAAWFSRSIDCQNLTGKKVVVFGDTTHAASMTKILAREMGIHVVCAGTYCKHDADWFKEQVQGYCDEILVTDDHTQVGDMIARIEPAAIFGSQMERHIGKRLDIPCGVISAPVHIQNFPLGYRPFLGYEGTNQIADLVYNSFTLGMEDHLLEMFGGHDTKEVITKSLSTDTDFTWDSESQLELTKIPGFVRAKIKRNTEKFARQNGVAKITVEVMYAAKEALNA.

Residue Asp-36 participates in [4Fe-4S] cluster binding. Asp-299 (proton donor) is an active-site residue. 434–435 (GM) contributes to the substrate binding site.

This sequence belongs to the ChlB/BchB/BchZ family. In terms of assembly, protochlorophyllide reductase is composed of three subunits; ChlL, ChlN and ChlB. Forms a heterotetramer of two ChlB and two ChlN subunits. Requires [4Fe-4S] cluster as cofactor.

The protein localises to the plastid. Its subcellular location is the chloroplast. The enzyme catalyses chlorophyllide a + oxidized 2[4Fe-4S]-[ferredoxin] + 2 ADP + 2 phosphate = protochlorophyllide a + reduced 2[4Fe-4S]-[ferredoxin] + 2 ATP + 2 H2O. Its pathway is porphyrin-containing compound metabolism; chlorophyll biosynthesis (light-independent). Component of the dark-operative protochlorophyllide reductase (DPOR) that uses Mg-ATP and reduced ferredoxin to reduce ring D of protochlorophyllide (Pchlide) to form chlorophyllide a (Chlide). This reaction is light-independent. The NB-protein (ChlN-ChlB) is the catalytic component of the complex. The chain is Light-independent protochlorophyllide reductase subunit B from Zygnema circumcarinatum (Green alga).